Consider the following 220-residue polypeptide: Probable N-acetyl-alpha-D-glucosaminyl L-malate deacetylase 2 (220 aa).

Zn(2+)-binding residues include His11, Asp14, and His125.

The protein belongs to the PIGL family. Requires Zn(2+) as cofactor.

It catalyses the reaction (S)-malyl N-acetyl-alpha-D-glucosaminide + H2O = (S)-malyl alpha-D-glucosaminide + acetate. Its function is as follows. Involved in bacillithiol (BSH) biosynthesis. Catalyzes the second step of the pathway, the deacetylation of N-acetylglucosaminylmalate (GlcNAc-Mal) to glucosamine malate (GlcN-Mal). Has weak activity compared with bshB1. This chain is Probable N-acetyl-alpha-D-glucosaminyl L-malate deacetylase 2, found in Bacillus cereus (strain ATCC 14579 / DSM 31 / CCUG 7414 / JCM 2152 / NBRC 15305 / NCIMB 9373 / NCTC 2599 / NRRL B-3711).